A 506-amino-acid chain; its full sequence is ATP synthase subunit alpha (506 aa).

Positions 119 to 129 (GPIEYEGKRPI) are enriched in basic and acidic residues. The interval 119–138 (GPIEYEGKRPIESPAPPIVR) is disordered. Residue 169-176 (GDRQTGKT) coordinates ATP.

This sequence belongs to the ATPase alpha/beta chains family. As to quaternary structure, F-type ATPases have 2 components, CF(1) - the catalytic core - and CF(0) - the membrane proton channel. CF(1) has five subunits: alpha(3), beta(3), gamma(1), delta(1), epsilon(1). CF(0) has three main subunits: a(1), b(2) and c(9-12). The alpha and beta chains form an alternating ring which encloses part of the gamma chain. CF(1) is attached to CF(0) by a central stalk formed by the gamma and epsilon chains, while a peripheral stalk is formed by the delta and b chains.

The protein resides in the cell membrane. The enzyme catalyses ATP + H2O + 4 H(+)(in) = ADP + phosphate + 5 H(+)(out). Produces ATP from ADP in the presence of a proton gradient across the membrane. The alpha chain is a regulatory subunit. The protein is ATP synthase subunit alpha of Caldanaerobacter subterraneus subsp. tengcongensis (strain DSM 15242 / JCM 11007 / NBRC 100824 / MB4) (Thermoanaerobacter tengcongensis).